A 47-amino-acid polypeptide reads, in one-letter code: Lysis protein for colicin E9 (47 aa).

An N-terminal signal peptide occupies residues 1 to 19 (MKKITGIILLLLAAIILAA). C20 carries N-palmitoyl cysteine lipidation. C20 is lipidated: S-diacylglycerol cysteine.

It is found in the cell outer membrane. Its function is as follows. Lysis proteins are required for both colicin release and partial cell lysis. In Escherichia coli, this protein is Lysis protein for colicin E9 (lys).